The chain runs to 1184 residues: uncharacterized protein (1184 aa).

2 disordered regions span residues 115–152 (ETSS…AHVS) and 397–426 (TYKP…VPER). Composition is skewed to polar residues over residues 137–152 (HVMN…AHVS) and 397–421 (TYKP…TSHN). Ser-686 is subject to Phosphoserine. Basic and acidic residues-rich tracts occupy residues 705 to 767 (LSER…ESAH), 783 to 792 (FEHETEPSHY), 849 to 863 (SHAH…RDLG), and 891 to 902 (YLHDEKTRDTLT). Disordered regions lie at residues 705–870 (LSER…FGDV) and 890–1017 (DYLH…SSPK). Ser-905 is subject to Phosphoserine. The span at 920 to 932 (EDHPHASEAERAH) shows a compositional bias: basic and acidic residues. Over residues 941-950 (SSESSPESQS) the composition is skewed to low complexity. The segment covering 999–1011 (PRERLDDNAKEIL) has biased composition (basic and acidic residues). A Phosphoserine modification is found at Ser-1018. Disordered stretches follow at residues 1029-1107 (NRKD…IGTQ) and 1135-1154 (DVDN…KSRP). Residues 1032-1045 (DKAAVKRMLEEDSS) show a composition bias toward basic and acidic residues. Residues 1073–1107 (PAVNNSTKPVAVTSKNGHSRNGSHAAHSNNVIGTQ) show a composition bias toward polar residues. Over residues 1138–1150 (NVVSGHSNVNGVS) the composition is skewed to low complexity.

The protein resides in the cytoplasm. This is an uncharacterized protein from Schizosaccharomyces pombe (strain 972 / ATCC 24843) (Fission yeast).